The primary structure comprises 94 residues: Co-chaperonin GroES (94 aa).

This sequence belongs to the GroES chaperonin family. As to quaternary structure, heptamer of 7 subunits arranged in a ring. Interacts with the chaperonin GroEL.

It is found in the cytoplasm. Functionally, together with the chaperonin GroEL, plays an essential role in assisting protein folding. The GroEL-GroES system forms a nano-cage that allows encapsulation of the non-native substrate proteins and provides a physical environment optimized to promote and accelerate protein folding. GroES binds to the apical surface of the GroEL ring, thereby capping the opening of the GroEL channel. The polypeptide is Co-chaperonin GroES (Shouchella clausii (strain KSM-K16) (Alkalihalobacillus clausii)).